We begin with the raw amino-acid sequence, 374 residues long: MLTEHWLAWLYWNPPREAFTLPFIDHPVMWYGICFITGFILGYFIIVPIIALFVNQSKHLSSMDIQDWRSLVNQLKTSSSPLIQKCQNALNRQERQKLNSEIQPLNISSDLKNALLIKLNTILKENSIQRKDLEQAFQGAITSAKQISYFLADRLCWFIVFGTLIGARLGAVFFYDWNYFKSHPLEIFEVWKGGLASHGGALGVMLALFFYTSYIKKWTPTLSFLRVLDFVAIPSALTAVFIRIGNFFNQEIIGTPSAYPWAVLFAQPADGSLPIPRHPVQLYEAFAYLMTFFLLFTLWKKCNTCLAAGTYAGFLFIFNFSSRFLLEFWKANLDSILTNPILQMGQLLSIPFILFGICLVWRKQNWQNLFCCHR.

The next 4 membrane-spanning stretches (helical) occupy residues 33–53 (ICFI…IALF), 155–175 (LCWF…VFFY), 195–215 (LASH…TSYI), and 222–242 (LSFL…AVFI). Position 243 (arginine 243) interacts with a 1,2-diacyl-sn-glycero-3-phospho-(1'-sn-glycerol). 3 helical membrane-spanning segments follow: residues 279–299 (PVQL…FTLW), 306–326 (LAAG…RFLL), and 341–361 (ILQM…CLVW).

It belongs to the Lgt family.

It localises to the cell inner membrane. The enzyme catalyses L-cysteinyl-[prolipoprotein] + a 1,2-diacyl-sn-glycero-3-phospho-(1'-sn-glycerol) = an S-1,2-diacyl-sn-glyceryl-L-cysteinyl-[prolipoprotein] + sn-glycerol 1-phosphate + H(+). The protein operates within protein modification; lipoprotein biosynthesis (diacylglyceryl transfer). Its function is as follows. Catalyzes the transfer of the diacylglyceryl group from phosphatidylglycerol to the sulfhydryl group of the N-terminal cysteine of a prolipoprotein, the first step in the formation of mature lipoproteins. The sequence is that of Phosphatidylglycerol--prolipoprotein diacylglyceryl transferase from Protochlamydia amoebophila (strain UWE25).